The chain runs to 314 residues: Dihydroorotate dehydrogenase (fumarate) (314 aa).

Substrate-binding positions include lysine 46, 70 to 74 (NSMGL), and asparagine 130. FMN is bound at residue 46 to 47 (KS). Position 130 (asparagine 130) interacts with FMN. Residues serine 132 and cysteine 133 each act as nucleophile in the active site. The FMN site is built by lysine 167 and isoleucine 195. 196–197 (NS) is a substrate binding site. FMN-binding positions include glycine 224, 252-253 (GG), and 274-275 (GT).

It belongs to the dihydroorotate dehydrogenase family. Type 1 subfamily. Homodimer. Requires FMN as cofactor.

The protein resides in the cytoplasm. It catalyses the reaction (S)-dihydroorotate + fumarate = orotate + succinate. It participates in pyrimidine metabolism; UMP biosynthesis via de novo pathway. Functionally, catalyzes the conversion of dihydroorotate to orotate with fumarate as the electron acceptor. The polypeptide is Dihydroorotate dehydrogenase (fumarate) (URA1) (Saccharomyces mikatae (Yeast)).